An 82-amino-acid polypeptide reads, in one-letter code: uncharacterized protein (82 aa).

Its function is as follows. Could be a silencing control element for the regulation of the restriction system. This is an uncharacterized protein from Herpetosiphon aurantiacus (Herpetosiphon giganteus).